The primary structure comprises 424 residues: Geranylgeranyl pyrophosphate synthase D (424 aa).

A disordered region spans residues P42–N73. The span at S58–A67 shows a compositional bias: polar residues. Positions 147, 150, and 179 each coordinate isopentenyl diphosphate. D186 and D190 together coordinate Mg(2+). R195 lines the dimethylallyl diphosphate pocket. Position 196 (R196) interacts with isopentenyl diphosphate. 5 residues coordinate dimethylallyl diphosphate: K274, T275, Q311, K328, and K338.

The protein belongs to the FPP/GGPP synthase family. Mg(2+) is required as a cofactor.

The protein localises to the cytoplasm. The enzyme catalyses isopentenyl diphosphate + dimethylallyl diphosphate = (2E)-geranyl diphosphate + diphosphate. It carries out the reaction isopentenyl diphosphate + (2E)-geranyl diphosphate = (2E,6E)-farnesyl diphosphate + diphosphate. The catalysed reaction is isopentenyl diphosphate + (2E,6E)-farnesyl diphosphate = (2E,6E,10E)-geranylgeranyl diphosphate + diphosphate. Its pathway is isoprenoid biosynthesis; farnesyl diphosphate biosynthesis; farnesyl diphosphate from geranyl diphosphate and isopentenyl diphosphate: step 1/1. It functions in the pathway isoprenoid biosynthesis; geranyl diphosphate biosynthesis; geranyl diphosphate from dimethylallyl diphosphate and isopentenyl diphosphate: step 1/1. It participates in isoprenoid biosynthesis; geranylgeranyl diphosphate biosynthesis; geranylgeranyl diphosphate from farnesyl diphosphate and isopentenyl diphosphate: step 1/1. Functionally, catalyzes the trans-addition of the 3 molecules of isopentenyl diphosphate (IPP) onto dimethylallyl diphosphate (DMAPP) to form geranylgeranyl pyrophosphate (GGDP). This is Geranylgeranyl pyrophosphate synthase D (GGS-D) from Phomopsis amygdali (Fusicoccum amygdali).